The primary structure comprises 199 residues: NADH-quinone oxidoreductase subunit C (199 aa).

The protein belongs to the complex I 30 kDa subunit family. NDH-1 is composed of 14 different subunits. Subunits NuoB, C, D, E, F, and G constitute the peripheral sector of the complex.

It localises to the cell inner membrane. The enzyme catalyses a quinone + NADH + 5 H(+)(in) = a quinol + NAD(+) + 4 H(+)(out). Its function is as follows. NDH-1 shuttles electrons from NADH, via FMN and iron-sulfur (Fe-S) centers, to quinones in the respiratory chain. The immediate electron acceptor for the enzyme in this species is believed to be ubiquinone. Couples the redox reaction to proton translocation (for every two electrons transferred, four hydrogen ions are translocated across the cytoplasmic membrane), and thus conserves the redox energy in a proton gradient. The protein is NADH-quinone oxidoreductase subunit C of Roseobacter denitrificans (strain ATCC 33942 / OCh 114) (Erythrobacter sp. (strain OCh 114)).